We begin with the raw amino-acid sequence, 218 residues long: Large ribosomal subunit protein uL3 (218 aa).

Gln-153 is modified (N5-methylglutamine).

It belongs to the universal ribosomal protein uL3 family. As to quaternary structure, part of the 50S ribosomal subunit. Forms a cluster with proteins L14 and L19. Post-translationally, methylated by PrmB.

Functionally, one of the primary rRNA binding proteins, it binds directly near the 3'-end of the 23S rRNA, where it nucleates assembly of the 50S subunit. The chain is Large ribosomal subunit protein uL3 from Alkalilimnicola ehrlichii (strain ATCC BAA-1101 / DSM 17681 / MLHE-1).